A 262-amino-acid chain; its full sequence is Acetylglutamate kinase (262 aa).

Substrate-binding positions include 46–47 (GG), Arg-68, and Asn-160.

Belongs to the acetylglutamate kinase family. ArgB subfamily.

Its subcellular location is the cytoplasm. It catalyses the reaction N-acetyl-L-glutamate + ATP = N-acetyl-L-glutamyl 5-phosphate + ADP. Its pathway is amino-acid biosynthesis; L-arginine biosynthesis; N(2)-acetyl-L-ornithine from L-glutamate: step 2/4. Its function is as follows. Catalyzes the ATP-dependent phosphorylation of N-acetyl-L-glutamate. This Shewanella amazonensis (strain ATCC BAA-1098 / SB2B) protein is Acetylglutamate kinase.